The primary structure comprises 294 residues: Glycine--tRNA ligase alpha subunit (294 aa).

It belongs to the class-II aminoacyl-tRNA synthetase family. In terms of assembly, tetramer of two alpha and two beta subunits.

The protein resides in the cytoplasm. The enzyme catalyses tRNA(Gly) + glycine + ATP = glycyl-tRNA(Gly) + AMP + diphosphate. The sequence is that of Glycine--tRNA ligase alpha subunit from Lawsonia intracellularis (strain PHE/MN1-00).